We begin with the raw amino-acid sequence, 100 residues long: Integration host factor subunit alpha (100 aa).

The interval 50 to 70 is disordered; it reads GNFQLRDKPQRPGRNPKTGEE.

It belongs to the bacterial histone-like protein family. In terms of assembly, heterodimer of an alpha and a beta chain.

Its function is as follows. This protein is one of the two subunits of integration host factor, a specific DNA-binding protein that functions in genetic recombination as well as in transcriptional and translational control. The sequence is that of Integration host factor subunit alpha from Chromobacterium violaceum (strain ATCC 12472 / DSM 30191 / JCM 1249 / CCUG 213 / NBRC 12614 / NCIMB 9131 / NCTC 9757 / MK).